The chain runs to 320 residues: FHA domain-containing protein FHA2 (320 aa).

Ala2 is subject to N-acetylalanine. Residues Ile32–His89 form the FHA domain. The disordered stretch occupies residues Val138–Glu211. A compositionally biased stretch (acidic residues) spans Glu163–Asp178. Positions Gly198–Arg210 are enriched in basic and acidic residues.

In terms of tissue distribution, widely expressed.

The protein localises to the nucleus. In terms of biological role, may play a role in the control of plant organ development and specifically in the regulation of stamen development. Does not show transactivation activity in yeast. The chain is FHA domain-containing protein FHA2 from Arabidopsis thaliana (Mouse-ear cress).